Here is a 166-residue protein sequence, read N- to C-terminus: Phosphopantetheine adenylyltransferase (166 aa).

Ser-9 is a substrate binding site. Residues 9-10 (SF) and His-17 contribute to the ATP site. Lys-41, Thr-74, and Arg-88 together coordinate substrate. Residues 89 to 91 (GLR), Glu-99, and 124 to 130 (DSFISSS) each bind ATP.

The protein belongs to the bacterial CoaD family. In terms of assembly, homohexamer. It depends on Mg(2+) as a cofactor.

It is found in the cytoplasm. It carries out the reaction (R)-4'-phosphopantetheine + ATP + H(+) = 3'-dephospho-CoA + diphosphate. Its pathway is cofactor biosynthesis; coenzyme A biosynthesis; CoA from (R)-pantothenate: step 4/5. Functionally, reversibly transfers an adenylyl group from ATP to 4'-phosphopantetheine, yielding dephospho-CoA (dPCoA) and pyrophosphate. This chain is Phosphopantetheine adenylyltransferase, found in Lactobacillus gasseri (strain ATCC 33323 / DSM 20243 / BCRC 14619 / CIP 102991 / JCM 1131 / KCTC 3163 / NCIMB 11718 / NCTC 13722 / AM63).